A 275-amino-acid chain; its full sequence is Undecaprenyl-diphosphatase (275 aa).

7 helical membrane passes run 8 to 28 (WTIVHYFVLGLVQGITEPIPI), 45 to 65 (ARGLSFEIFVNLASLLAVLII), 92 to 112 (FMFVVYLVLATIPVGIVGVLF), 119 to 139 (FIGEDGTTVVGITLLITAAAI), 197 to 217 (FSFLLYIPVSLGSSILEIPNI), 225 to 245 (ELWIPYLVAFITAFIASYFAL), and 255 to 275 (GNLKYFAYYCVIVGVLVLIFL).

Belongs to the UppP family.

The protein localises to the cell membrane. The catalysed reaction is di-trans,octa-cis-undecaprenyl diphosphate + H2O = di-trans,octa-cis-undecaprenyl phosphate + phosphate + H(+). Its function is as follows. Catalyzes the dephosphorylation of undecaprenyl diphosphate (UPP). Confers resistance to bacitracin. The polypeptide is Undecaprenyl-diphosphatase (Oceanobacillus iheyensis (strain DSM 14371 / CIP 107618 / JCM 11309 / KCTC 3954 / HTE831)).